The chain runs to 126 residues: UPF0538 protein C2orf76 homolog (126 aa).

Belongs to the UPF0538 family.

The sequence is that of UPF0538 protein C2orf76 homolog from Pongo abelii (Sumatran orangutan).